A 367-amino-acid chain; its full sequence is Lysophosphatidic acid receptor 5 (367 aa).

Topologically, residues 1 to 25 (MQANSSAKSLPTECPDYQPIHHLHL) are extracellular. An N-linked (GlcNAc...) asparagine glycan is attached at Asn4. A helical membrane pass occupies residues 26-46 (VVYSVVLAAGLPLNALALWVF). Over 47–54 (LRALRVHS) the chain is Cytoplasmic. Residues 55-75 (VVSVYMCNLAASDLLFTLSLP) traverse the membrane as a helical segment. The Extracellular segment spans residues 76-95 (LRLSYYARHYWPFPDFLCQL). Cys93 and Cys174 are oxidised to a cystine. Residues 96 to 116 (AGAVFQMNMYGSCIFLTLINV) form a helical membrane-spanning segment. The Cytoplasmic portion of the chain corresponds to 117–135 (DRYAAIVHPLRLRHLRRPR). Residues 136-156 (VARLLCLGVWALILVFAVPTI) form a helical membrane-spanning segment. The Extracellular portion of the chain corresponds to 157–186 (LAHQPSSCARDGRNVSLCFESFSDKLWKGS). N-linked (GlcNAc...) asparagine glycosylation occurs at Asn170. A helical membrane pass occupies residues 187–207 (LLPLLLLAEALGFLLPLAAVV). The Cytoplasmic portion of the chain corresponds to 208–238 (YSSGRVFWTLARPDATRSQRRRKTVRLLLAS). The chain crosses the membrane as a helical span at residues 239-259 (LVIFLLCFVPYNATLAVYGLL). Residues 260 to 275 (RGEVVPASSEARKKVR) are Extracellular-facing. Residues 276–296 (GVLMVMVLLAGANCVLDPLVY) form a helical membrane-spanning segment. Topologically, residues 297 to 367 (YFSAEGFRNT…FTPSHEDSSF (71 aa)) are cytoplasmic. Over residues 332-350 (LTETAHASTLTTTSQGQLQ) the composition is skewed to low complexity. Residues 332–367 (LTETAHASTLTTTSQGQLQPSDPRSSFTPSHEDSSF) form a disordered region. Residues 351–360 (PSDPRSSFTP) are compositionally biased toward polar residues.

The protein belongs to the G-protein coupled receptor 1 family.

The protein localises to the cell membrane. Functionally, receptor for lysophosphatidic acid (LPA), a mediator of diverse cellular activities. This chain is Lysophosphatidic acid receptor 5 (LPAR5), found in Bos taurus (Bovine).